A 599-amino-acid polypeptide reads, in one-letter code: MALMIFSMVFMFILLFKPLVFSMMNKKCLNSTYTSTVKWAFITSMIPLMMYMNSSKEIIILNWHWLTVHTIELKMSFKLDLYSITFMPVALYVTWSIMEYSTWYMKHDPHLKRFLNYLSLFLITMLILVTANNMFQLFIGWEGVGIMSFLLIGWWYGRTDANTAALQAIIYNRVGDIGLVIAMAWFYKNSNSWELQQIFSLGTTSNLPLIGLILAAMGKSAQFGLHPWLPSAMEGPTPVSALLHSSTMVVAGVFLLIRFHPLMSNNSMIMTTILCIGAMTTLFTAICALTQNDIKKIIAFSTSSQLGLMMVTLGINQPYLSFLHICTHAFFKAMLFMCAGSIIHNLNDEQDIRKMGGISKTMPLTASAMTIGNLALMGTPFMSGFYSKDLIIESMNTSNINSWALITTLIATSLTAAYSTRLIYFVLSNSPRCNSVINMNESDNKLTSPIKRLMLGSIFAGFLLSNFIQPVNMQNMTMPFTIKITAMLVTIMGVIVAMELNLMTQYMKMYPNNYNFNFSIMLGFFPTIIHRSVSKSFLNFNQKIATSLMDYMWLEKIVPNAVVMMNNAASATTSTHKGMLKIYFMSFILSMVMLMLIMS.

Transmembrane regions (helical) follow at residues 1–21, 41–61, 79–99, 114–134, 137–157, 166–186, 198–218, 237–257, 269–289, 297–317, 323–343, 362–382, 400–420, 453–473, 478–498, 509–529, and 578–598; these read MALMIFSMVFMFILLFKPLVF, FITSMIPLMMYMNSSKEIIIL, LDLYSITFMPVALYVTWSIME, FLNYLSLFLITMLILVTANNM, LFIGWEGVGIMSFLLIGWWYG, LQAIIYNRVGDIGLVIAMAWF, IFSLGTTSNLPLIGLILAAMG, TPVSALLHSSTMVVAGVFLLI, IMTTILCIGAMTTLFTAICAL, IIAFSTSSQLGLMMVTLGINQ, LHICTHAFFKAMLFMCAGSII, MPLTASAMTIGNLALMGTPFM, INSWALITTLIATSLTAAYST, LMLGSIFAGFLLSNFIQPVNM, MPFTIKITAMLVTIMGVIVAM, MYPNNYNFNFSIMLGFFPTII, and GMLKIYFMSFILSMVMLMLIM.

The protein belongs to the complex I subunit 5 family.

The protein resides in the mitochondrion inner membrane. The catalysed reaction is a ubiquinone + NADH + 5 H(+)(in) = a ubiquinol + NAD(+) + 4 H(+)(out). Core subunit of the mitochondrial membrane respiratory chain NADH dehydrogenase (Complex I) that is believed to belong to the minimal assembly required for catalysis. Complex I functions in the transfer of electrons from NADH to the respiratory chain. The immediate electron acceptor for the enzyme is believed to be ubiquinone. The polypeptide is NADH-ubiquinone oxidoreductase chain 5 (ND5) (Geomys personatus (Texas pocket gopher)).